A 503-amino-acid polypeptide reads, in one-letter code: Cytochrome P450 3A13 (503 aa).

Residue cysteine 442 coordinates heme.

It belongs to the cytochrome P450 family. Requires heme as cofactor.

Its subcellular location is the endoplasmic reticulum membrane. The protein resides in the microsome membrane. The enzyme catalyses an organic molecule + reduced [NADPH--hemoprotein reductase] + O2 = an alcohol + oxidized [NADPH--hemoprotein reductase] + H2O + H(+). In terms of biological role, can activate aflatoxin B1 to a genotoxic product. This chain is Cytochrome P450 3A13 (Cyp3a13), found in Mus musculus (Mouse).